Here is a 133-residue protein sequence, read N- to C-terminus: UPF0102 protein ABSDF1354 (133 aa).

This sequence belongs to the UPF0102 family.

The polypeptide is UPF0102 protein ABSDF1354 (Acinetobacter baumannii (strain SDF)).